The primary structure comprises 329 residues: PDZ and LIM domain protein 1 (329 aa).

Threonine 2 carries the post-translational modification N-acetylthreonine. One can recognise a PDZ domain in the interval 3–85 (TQQIDLQGPG…NLTLTVARSE (83 aa)). A phosphoserine mark is found at serine 90 and serine 130. Tyrosine 144 bears the Phosphotyrosine mark. Residues 258–317 (PMCDKCGTGIVGVFVKLRDRHRHPECYVCTDCGTNLKQKGHFFVEDQIYCEKHARERVTP) enclose the LIM zinc-binding domain. 8 residues coordinate Zn(2+): cysteine 260, cysteine 263, histidine 280, cysteine 283, cysteine 286, cysteine 289, cysteine 307, and histidine 310. Threonine 316 carries the phosphothreonine modification. At tyrosine 321 the chain carries Phosphotyrosine.

In terms of assembly, interacts with ACTN1, ACTN2 and ACTN4. Interacts with PDLIM4. In terms of tissue distribution, strongly expressed in the heart and skeletal muscle, moderately expressed in the spleen, small intestine, colon, placenta, and lung. A lower level expression is seen in liver, thymus, kidney, prostate and pancreas and is not found in the brain, testis, ovary, and peripheral blood leukocytes.

The protein localises to the cytoplasm. The protein resides in the cytoskeleton. Its subcellular location is the myofibril. It localises to the sarcomere. It is found in the z line. Cytoskeletal protein that may act as an adapter that brings other proteins (like kinases) to the cytoskeleton. Involved in assembly, disassembly and directioning of stress fibers in fibroblasts. Required for the localization of ACTN1 and PALLD to stress fibers. Required for cell migration and in maintaining cell polarity of fibroblasts. In Homo sapiens (Human), this protein is PDZ and LIM domain protein 1 (PDLIM1).